An 862-amino-acid chain; its full sequence is Taxadiene synthase (862 aa).

Positions 613, 617, 757, 761, and 765 each coordinate Mg(2+). Positions 613-617 match the DDXXD motif motif; it reads DDMAD.

Belongs to the terpene synthase family. The cofactor is Mg(2+).

The catalysed reaction is (2E,6E,10E)-geranylgeranyl diphosphate = taxa-4(5),11(12)-diene + diphosphate. The protein operates within alkaloid biosynthesis; taxol biosynthesis; taxa-4(20),11-dien-5alpha-ol from geranylgeranyl diphosphate: step 1/2. Catalyzes the cyclization of the ubiquitous isoprenoid intermediate geranylgeranyl diphosphate to taxa-4,11-diene, the parent olefin with a taxane skeleton. The sequence is that of Taxadiene synthase (TDC1) from Taxus brevifolia (Pacific yew).